The following is a 261-amino-acid chain: Flagellar L-ring protein (261 aa).

An N-terminal signal peptide occupies residues 1-15 (MKRLLCLLLLTTLTG). Cysteine 16 carries the N-palmitoyl cysteine lipid modification. Residue cysteine 16 is the site of S-diacylglycerol cysteine attachment. A compositionally biased stretch (basic and acidic residues) spans 121–133 (KSADAELSKKNDS). A disordered region spans residues 121–140 (KSADAELSKKNDSSMDPLQV).

It belongs to the FlgH family. The basal body constitutes a major portion of the flagellar organelle and consists of four rings (L,P,S, and M) mounted on a central rod.

The protein localises to the cell outer membrane. Its subcellular location is the bacterial flagellum basal body. Functionally, assembles around the rod to form the L-ring and probably protects the motor/basal body from shearing forces during rotation. The polypeptide is Flagellar L-ring protein (Aliivibrio salmonicida (strain LFI1238) (Vibrio salmonicida (strain LFI1238))).